Here is a 190-residue protein sequence, read N- to C-terminus: NADH-ubiquinone oxidoreductase 75 kDa subunit, mitochondrial (190 aa).

The protein belongs to the complex I 75 kDa subunit family. Core subunit of respiratory chain NADH dehydrogenase (Complex I) which is composed of 45 different subunits. This is the largest subunit of complex I and it is a component of the iron-sulfur (IP) fragment of the enzyme. Complex I associates with ubiquinol-cytochrome reductase complex (Complex III) to form supercomplexes. Interacts with MDM2 and AKAP1. [2Fe-2S] cluster serves as cofactor. The cofactor is [4Fe-4S] cluster.

It is found in the mitochondrion inner membrane. It carries out the reaction a ubiquinone + NADH + 5 H(+)(in) = a ubiquinol + NAD(+) + 4 H(+)(out). Functionally, core subunit of the mitochondrial membrane respiratory chain NADH dehydrogenase (Complex I) which catalyzes electron transfer from NADH through the respiratory chain, using ubiquinone as an electron acceptor. Essential for catalysing the entry and efficient transfer of electrons within complex I. Plays a key role in the assembly and stability of complex I and participates in the association of complex I with ubiquinol-cytochrome reductase complex (Complex III) to form supercomplexes. The protein is NADH-ubiquinone oxidoreductase 75 kDa subunit, mitochondrial of Mesocricetus auratus (Golden hamster).